A 62-amino-acid polypeptide reads, in one-letter code: Conotoxin Lt5.5 (62 aa).

An N-terminal signal peptide occupies residues 1-22 (MRCLQVFIIFLLLIPSPPSVDA). Residues 23-48 (QRKTKDDVPLASFHDNAKRTLKRLWN) constitute a propeptide that is removed on maturation.

The protein belongs to the conotoxin T superfamily. Contains 2 disulfide bonds that can be either 'C1-C3, C2-C4' or 'C1-C4, C2-C3', since these disulfide connectivities have been observed for conotoxins with cysteine framework V (for examples, see AC P0DQQ7 and AC P81755). In terms of tissue distribution, expressed by the venom duct.

The protein resides in the secreted. This chain is Conotoxin Lt5.5, found in Conus litteratus (Lettered cone).